The sequence spans 158 residues: 2-C-methyl-D-erythritol 2,4-cyclodiphosphate synthase (158 aa).

Positions 9 and 11 each coordinate a divalent metal cation. Residues 9 to 11 and 35 to 36 each bind 4-CDP-2-C-methyl-D-erythritol 2-phosphate; these read DVH and HS. Histidine 43 contacts a divalent metal cation. 4-CDP-2-C-methyl-D-erythritol 2-phosphate-binding positions include 57–59, 62–66, 101–107, 133–136, phenylalanine 140, and arginine 143; these read DIG, FPDTD, AQAPKMA, and TTTE.

It belongs to the IspF family. Homotrimer. A divalent metal cation is required as a cofactor.

It catalyses the reaction 4-CDP-2-C-methyl-D-erythritol 2-phosphate = 2-C-methyl-D-erythritol 2,4-cyclic diphosphate + CMP. The protein operates within isoprenoid biosynthesis; isopentenyl diphosphate biosynthesis via DXP pathway; isopentenyl diphosphate from 1-deoxy-D-xylulose 5-phosphate: step 4/6. Its function is as follows. Involved in the biosynthesis of isopentenyl diphosphate (IPP) and dimethylallyl diphosphate (DMAPP), two major building blocks of isoprenoid compounds. Catalyzes the conversion of 4-diphosphocytidyl-2-C-methyl-D-erythritol 2-phosphate (CDP-ME2P) to 2-C-methyl-D-erythritol 2,4-cyclodiphosphate (ME-CPP) with a corresponding release of cytidine 5-monophosphate (CMP). In Vibrio vulnificus (strain CMCP6), this protein is 2-C-methyl-D-erythritol 2,4-cyclodiphosphate synthase.